Consider the following 1501-residue polypeptide: EF-hand calcium-binding domain-containing protein 6 (1501 aa).

The disordered stretch occupies residues 18–47; the sequence is RKFTHSRPHSSPCRVYSRNGSPNKFRSSST. A compositionally biased stretch (polar residues) spans 35–47; that stretch reads RNGSPNKFRSSST. EF-hand domains follow at residues 70 to 105, 172 to 207, 297 to 332, 403 to 438, 439 to 474, 504 to 539, and 634 to 669; these read DRGD…FLMP, KNIK…FCMK, KSYE…FVYQ, DHSA…MAVK, LSDS…NCRM, RNLQ…FCPF, and QQDP…TGMP. A disordered region spans residues 699 to 718; sequence EDPPMRGPETTPPQPPTPSK. EF-hand domains follow at residues 741–776, 847–882, 883–918, 964–999, 1069–1104, 1176–1211, and 1212–1247; these read ESFR…LLLN, NRWS…FDIP, LTPR…NYSP, DRHQ…CGCS, SSQL…FCYK, SHYH…RVQI, and LTDE…ETAA. The Ca(2+) site is built by aspartate 754, aspartate 756, aspartate 758, and aspartate 765. Phosphothreonine is present on threonine 884. Residues 1246–1307 are disordered; sequence AATPMATGDS…TTVIPGTPPL (62 aa). 2 stretches are compositionally biased toward polar residues: residues 1270–1279 and 1286–1301; these read GTRSALSLPT and SKSQ…TTVI. Serine 1290 carries the phosphoserine modification. A phosphothreonine mark is found at threonine 1294 and threonine 1304. Residues 1303 to 1501 are interaction with PARK7; it reads GTPPLQNCDP…YNDFLRAFLQ (199 aa). 3 consecutive EF-hand domains span residues 1359–1394, 1434–1469, and 1470–1501; these read ISKE…LLKA, HCWR…YSIN, and LSEE…AFLQ. Residues 1407–1501 form an interaction with AR region; that stretch reads NAHKMKEAGA…YNDFLRAFLQ (95 aa).

As to quaternary structure, microtubule inner protein component of sperm flagellar doublet microtubules. Binds PARK7. Part of a ternary complex containing PARK7, EFCAB6/DJBP and AR. In terms of tissue distribution, specifically expressed in the testis.

The protein localises to the nucleus. Its subcellular location is the cytoplasm. It localises to the cytoskeleton. It is found in the flagellum axoneme. In terms of biological role, negatively regulates the androgen receptor by recruiting histone deacetylase complex, and protein DJ-1 antagonizes this inhibition by abrogation of this complex. Microtubule inner protein (MIP) part of the dynein-decorated doublet microtubules (DMTs) in cilia axoneme, which is required for motile cilia beating. The protein is EF-hand calcium-binding domain-containing protein 6 of Homo sapiens (Human).